An 85-amino-acid polypeptide reads, in one-letter code: UPF0473 protein CPR_1590 (85 aa).

The protein belongs to the UPF0473 family.

The polypeptide is UPF0473 protein CPR_1590 (Clostridium perfringens (strain SM101 / Type A)).